A 513-amino-acid chain; its full sequence is Lysine--tRNA ligase (513 aa).

Mg(2+) contacts are provided by glutamate 422 and glutamate 429.

This sequence belongs to the class-II aminoacyl-tRNA synthetase family. As to quaternary structure, homodimer. Requires Mg(2+) as cofactor.

The protein localises to the cytoplasm. It carries out the reaction tRNA(Lys) + L-lysine + ATP = L-lysyl-tRNA(Lys) + AMP + diphosphate. The protein is Lysine--tRNA ligase of Tolumonas auensis (strain DSM 9187 / NBRC 110442 / TA 4).